The primary structure comprises 204 residues: Distal tail protein pb9 (204 aa).

In terms of assembly, homohexamer. Interacts with baseplate tube protein p140 and baseplate hub protein pb3.

It is found in the virion. Forms the simplified baseplate, together with the p132 collar protein, the baseplate tube protein p140 and baseplate hub protein pb3. This is Distal tail protein pb9 (D16) from Escherichia phage T5 (Enterobacteria phage T5).